We begin with the raw amino-acid sequence, 545 residues long: Chaperonin GroEL (545 aa).

ATP is bound by residues 30 to 33 (TLGP), lysine 51, 87 to 91 (DGTTT), glycine 415, and aspartate 495.

It belongs to the chaperonin (HSP60) family. Forms a cylinder of 14 subunits composed of two heptameric rings stacked back-to-back. Interacts with the co-chaperonin GroES.

Its subcellular location is the cytoplasm. The enzyme catalyses ATP + H2O + a folded polypeptide = ADP + phosphate + an unfolded polypeptide.. In terms of biological role, together with its co-chaperonin GroES, plays an essential role in assisting protein folding. The GroEL-GroES system forms a nano-cage that allows encapsulation of the non-native substrate proteins and provides a physical environment optimized to promote and accelerate protein folding. The protein is Chaperonin GroEL of Shewanella putrefaciens (strain CN-32 / ATCC BAA-453).